The sequence spans 159 residues: Short coiled-coil protein (159 aa).

Residues 78–146 adopt a coiled-coil conformation; the sequence is MMNADMDAVD…QYIENLMSAS (69 aa).

The protein belongs to the SCOC family. In terms of assembly, homodimer. Interacts with ARL1, ARL2 and ARL3. Directly interacts with FEZ1 and UVRAG. The interaction with UVRAG is reduced by amino acid starvation, but the complex is stabilized in the presence of FEZ1. Interacts with NRBF2. As to expression, widely expressed with highest levels in brain, heart and skeletal muscle.

The protein resides in the golgi apparatus membrane. The protein localises to the golgi apparatus. Its subcellular location is the trans-Golgi network. It is found in the cytoplasm. It localises to the cytosol. In terms of biological role, positive regulator of amino acid starvation-induced autophagy. The protein is Short coiled-coil protein (SCOC) of Homo sapiens (Human).